A 283-amino-acid polypeptide reads, in one-letter code: Syntaxin VAM3 (283 aa).

The segment at M1–K26 is disordered. The Cytoplasmic portion of the chain corresponds to M1–K261. Over residues A8–Q25 the composition is skewed to polar residues. 2 coiled-coil regions span residues K28–C48 and L84–Q111. Disordered regions lie at residues F116 to S146 and N162 to S182. The span at S127 to P144 shows a compositional bias: basic and acidic residues. Residues Q169–Q189 are a coiled coil. The region spanning T190 to A252 is the t-SNARE coiled-coil homology domain. A helical; Anchor for type IV membrane protein membrane pass occupies residues C262–L282. S283 is a topological domain (vacuolar).

The protein belongs to the syntaxin family. Associates with VAM7.

The protein localises to the vacuole membrane. Functionally, required for vacuolar assembly. Provides the t-SNARE function in a late step of the vacuolar assembly. Required for homotypic vacuole membrane fusion, autophagy and fusion of biosynthetic transport vesicles with the vacuole. Required for the delivery of alpha-factor receptor-ligand complexes to the vacuole. The sequence is that of Syntaxin VAM3 (VAM3) from Saccharomyces cerevisiae (strain ATCC 204508 / S288c) (Baker's yeast).